Consider the following 76-residue polypeptide: Conotoxin Gla(1)-TxVI (76 aa).

Residues 1 to 19 (MEKLTILLLVAAVLMSTQA) form the signal peptide. A propeptide spanning residues 20–45 (LVERAGENHSKENINFLLKRKRAADR) is cleaved from the precursor. A 6'-bromotryptophan modification is found at tryptophan 48. Residue glutamate 50 is modified to 4-carboxyglutamate. Disulfide bonds link cysteine 51–cysteine 65, cysteine 58–cysteine 69, and cysteine 64–cysteine 73. Position 61 is a 4-hydroxyproline (proline 61). 3 positions are modified to 4-carboxyglutamate: glutamate 63, glutamate 67, and glutamate 70. At tryptophan 76 the chain carries 6'-bromotryptophan.

Expressed by the venom duct.

Its subcellular location is the secreted. The chain is Conotoxin Gla(1)-TxVI from Conus textile (Cloth-of-gold cone).